A 472-amino-acid polypeptide reads, in one-letter code: MFKKVLVANRGEIACRVIRACKELGIQTVAIYNEIESTARHVKMADEAYMIGVNPLDTYLNAERIVDLALEVGAEAIHPGYGFLAENEHFARLCEEKGITFIGPHWKVIELMGDKARSKEVMKRAGVPTVPGSDGILKDVEEAKRIAKEIGYPVLLKASAGGGGRGIRICRNEEELVRNYENAYNEAVKAFGRGDLLLEKYIENPKHIEFQVLGDKYGNVIHLGERDCSIQRRNQKLVEIAPSLLLTPEQREYYGSLVVKAAKEIGYYSAGTMEFIADEKGNLYFIEMNTRIQVEHPVTEMITGVDIVKWQIRIAAGERLRYSQEDIRFNGYSIECRINAEDPKKGFAPSIGTIERYYVPGGFGIRVEHASSKGYEITPYYDSLIAKLIVWAPLWEVAVDRMRSALETYEISGVKTTIPLLINIMKDKDFRDGKFTTRYLEEHPHVFDYAEHRDKEDFVAFISAVIASYHGL.

Residues 1-445 (MFKKVLVANR…TTRYLEEHPH (445 aa)) enclose the Biotin carboxylation domain. K115 and E199 together coordinate ATP. Residues 119 to 316 (KEVMKRAGVP…IVKWQIRIAA (198 aa)) enclose the ATP-grasp domain. R291 is a catalytic residue.

In terms of assembly, heterohexadecamer of 8 large subunits and 8 small subunits. Mg(2+) serves as cofactor. The cofactor is Mn(2+). It depends on Co(2+) as a cofactor.

It carries out the reaction hydrogencarbonate + 2-oxoglutarate + ATP = (S)-oxalosuccinate + ADP + phosphate + H(+). This chain is 2-oxoglutarate carboxylase small subunit, found in Hydrogenobacter thermophilus (strain DSM 6534 / IAM 12695 / TK-6).